The primary structure comprises 578 residues: CTP synthase 2 (578 aa).

Positions 305 to 564 (KIALVGKYTN…VAAASGTLGE (260 aa)) constitute a Glutamine amidotransferase type-1 domain. Active-site for GATase activity residues include cysteine 404, histidine 537, and glutamate 539.

It belongs to the CTP synthase family. Homodimer. Oligomerizes to a tetramer in the presence of its substrates UTP and ATP. Mg(2+) serves as cofactor.

The protein localises to the cytoplasm. It carries out the reaction UTP + L-glutamine + ATP + H2O = CTP + L-glutamate + ADP + phosphate + 2 H(+). The protein operates within pyrimidine metabolism; CTP biosynthesis via de novo pathway; CTP from UDP: step 2/2. With respect to regulation, activated by GTP. Subject to allosteric product inhibition by CTP. Inhibited by p-chloromercuriphenylsulfonic acid, N-ethylmaleimide and cyclopentenylcytosine (CPEC). Catalyzes the ATP-dependent amination of UTP to CTP with either L-glutamine or ammonia as the source of nitrogen. Plays an important role in the regulation of phospholipid synthesis. This is CTP synthase 2 (URA8) from Saccharomyces cerevisiae (strain ATCC 204508 / S288c) (Baker's yeast).